Consider the following 668-residue polypeptide: DNA ligase (668 aa).

NAD(+) contacts are provided by residues 34–38 (DAEYD), 83–84 (SL), and E113. The active-site N6-AMP-lysine intermediate is K115. The NAD(+) site is built by R136, E170, K286, and K310. Zn(2+) is bound by residues C404, C407, C422, and C427. Positions 590-668 (DSDSYFAGKT…EEQLMGELKK (79 aa)) constitute a BRCT domain.

The protein belongs to the NAD-dependent DNA ligase family. LigA subfamily. Requires Mg(2+) as cofactor. The cofactor is Mn(2+).

It carries out the reaction NAD(+) + (deoxyribonucleotide)n-3'-hydroxyl + 5'-phospho-(deoxyribonucleotide)m = (deoxyribonucleotide)n+m + AMP + beta-nicotinamide D-nucleotide.. In terms of biological role, DNA ligase that catalyzes the formation of phosphodiester linkages between 5'-phosphoryl and 3'-hydroxyl groups in double-stranded DNA using NAD as a coenzyme and as the energy source for the reaction. It is essential for DNA replication and repair of damaged DNA. This chain is DNA ligase, found in Bacillus subtilis (strain 168).